The following is a 205-amino-acid chain: Guanylate kinase (205 aa).

Residues 6–185 (GLLIVLSRPS…ACDRIKAIVV (180 aa)) enclose the Guanylate kinase-like domain. Residue 13–20 (RPSGVGKG) participates in ATP binding.

The protein belongs to the guanylate kinase family.

The protein resides in the cytoplasm. The enzyme catalyses GMP + ATP = GDP + ADP. In terms of biological role, essential for recycling GMP and indirectly, cGMP. This is Guanylate kinase from Bacillus cereus (strain ATCC 14579 / DSM 31 / CCUG 7414 / JCM 2152 / NBRC 15305 / NCIMB 9373 / NCTC 2599 / NRRL B-3711).